The chain runs to 309 residues: Elongation factor Ts (309 aa).

Residues 80-83 (TDFV) form an involved in Mg(2+) ion dislocation from EF-Tu region.

Belongs to the EF-Ts family.

It localises to the cytoplasm. Functionally, associates with the EF-Tu.GDP complex and induces the exchange of GDP to GTP. It remains bound to the aminoacyl-tRNA.EF-Tu.GTP complex up to the GTP hydrolysis stage on the ribosome. This Rhodospirillum rubrum (strain ATCC 11170 / ATH 1.1.1 / DSM 467 / LMG 4362 / NCIMB 8255 / S1) protein is Elongation factor Ts.